Here is a 142-residue protein sequence, read N- to C-terminus: Large ribosomal subunit protein uL13 (142 aa).

The protein belongs to the universal ribosomal protein uL13 family. As to quaternary structure, part of the 50S ribosomal subunit.

Its function is as follows. This protein is one of the early assembly proteins of the 50S ribosomal subunit, although it is not seen to bind rRNA by itself. It is important during the early stages of 50S assembly. The sequence is that of Large ribosomal subunit protein uL13 from Pseudomonas syringae pv. tomato (strain ATCC BAA-871 / DC3000).